Here is a 446-residue protein sequence, read N- to C-terminus: Histidine--tRNA ligase (446 aa).

Belongs to the class-II aminoacyl-tRNA synthetase family. Homodimer.

It localises to the cytoplasm. It catalyses the reaction tRNA(His) + L-histidine + ATP = L-histidyl-tRNA(His) + AMP + diphosphate + H(+). This is Histidine--tRNA ligase from Burkholderia pseudomallei (strain 1710b).